Consider the following 322-residue polypeptide: Myeloid-associated differentiation marker (322 aa).

Residues 1–18 (MPVTVTRTTITTTTTSSS) are compositionally biased toward low complexity. The interval 1–21 (MPVTVTRTTITTTTTSSSGLG) is disordered. Residue Ser-22 is modified to Phosphoserine. 2 consecutive MARVEL domains span residues 31-163 (ALTQ…ARPG) and 168-319 (YMAT…HLVF). 8 consecutive transmembrane segments (helical) span residues 41–61 (LLQL…GAWT), 70–90 (FTWC…LCGL), 101–121 (FPIT…IIYP), 137–157 (AIAA…EVAW), 171–191 (TVPG…FAFI), 203–223 (LEWC…AILL), 239–259 (FLSG…VLWP), and 294–314 (LAVA…LVHS).

This sequence belongs to the MAL family. Widely expressed. Not detected in thymus.

Its subcellular location is the membrane. The protein is Myeloid-associated differentiation marker (MYADM) of Homo sapiens (Human).